The chain runs to 382 residues: MNNFVKQVASKSLKPTKKLSPSDEVISLNECIISFNLDNFYYCNDGLFTKPINTPEDVLKSLLIMESFAYEKMIIKGLIKILISRAYINDIYFTPFGWLTGIDDDPETHVVIKIIFNSSLISIKSQVIEYLKPYNVNNLSVLTTEKELSINTFNVPDSIPMSIISFFPFDTDFILVILFFGVYNDSYCGISYISPKERLPYIIEILKPLMSEINMLSDEIGRTSSIRIFNSTSVKKFPTNTLTSICEIVYSFDESSFPTPKTFTPLNASPYIPKKIVSLLDLPSNVEIKAISRGGVDFITHINNKRLNTILVIAKDNFLKNSTFSGTFIKENIIWKGIYTYRIIKSSFPVPTIKSVTNKKKICKKHCFVNSQYTTRTLSHIL.

It belongs to the orthopoxvirus OPG082 family.

Its subcellular location is the virion. Binds to the hairpin form of the viral telomeric sequence. Might direct genome encapsidation into the virus particle. This is Telomere-binding protein OPG082 (OPG082) from Variola virus (isolate Human/India/Ind3/1967) (VARV).